The sequence spans 158 residues: NAD(P)H-quinone oxidoreductase subunit N (158 aa).

The protein belongs to the complex I NdhN subunit family. As to quaternary structure, NDH-1 can be composed of about 15 different subunits; different subcomplexes with different compositions have been identified which probably have different functions.

It is found in the cellular thylakoid membrane. It catalyses the reaction a plastoquinone + NADH + (n+1) H(+)(in) = a plastoquinol + NAD(+) + n H(+)(out). The catalysed reaction is a plastoquinone + NADPH + (n+1) H(+)(in) = a plastoquinol + NADP(+) + n H(+)(out). Its function is as follows. NDH-1 shuttles electrons from an unknown electron donor, via FMN and iron-sulfur (Fe-S) centers, to quinones in the respiratory and/or the photosynthetic chain. The immediate electron acceptor for the enzyme in this species is believed to be plastoquinone. Couples the redox reaction to proton translocation, and thus conserves the redox energy in a proton gradient. Cyanobacterial NDH-1 also plays a role in inorganic carbon-concentration. In Prochlorococcus marinus (strain MIT 9312), this protein is NAD(P)H-quinone oxidoreductase subunit N.